The following is a 99-amino-acid chain: MMALTKIEIAENLIEKFGLEKRVANEFVELFFEEIRSSLENGEEVKLSGFGNFSLREKKARPGRNPKTGENVAVSARRVVVFKAGQKLRERVEQASSQS.

This sequence belongs to the bacterial histone-like protein family. In terms of assembly, heterodimer of an alpha and a beta chain.

This protein is one of the two subunits of integration host factor, a specific DNA-binding protein that functions in genetic recombination as well as in transcriptional and translational control. In Mannheimia haemolytica (Pasteurella haemolytica), this protein is Integration host factor subunit alpha (ihfA).